Here is a 107-residue protein sequence, read N- to C-terminus: Nucleoid-associated protein Pnec_0645 (107 aa).

Belongs to the YbaB/EbfC family. In terms of assembly, homodimer.

It is found in the cytoplasm. The protein resides in the nucleoid. Functionally, binds to DNA and alters its conformation. May be involved in regulation of gene expression, nucleoid organization and DNA protection. In Polynucleobacter necessarius subsp. necessarius (strain STIR1), this protein is Nucleoid-associated protein Pnec_0645.